The chain runs to 123 residues: Small ribosomal subunit protein uS13c (123 aa).

The interval 90–123 (GKRHRNNLPVRGQRTRTNARSRRGSKKTVTGKKK) is disordered. Over residues 102-123 (QRTRTNARSRRGSKKTVTGKKK) the composition is skewed to basic residues.

This sequence belongs to the universal ribosomal protein uS13 family. As to quaternary structure, part of the 30S ribosomal subunit.

The protein resides in the plastid. It is found in the chloroplast. In terms of biological role, located at the top of the head of the 30S subunit, it contacts several helices of the 16S rRNA. The chain is Small ribosomal subunit protein uS13c from Trieres chinensis (Marine centric diatom).